Here is a 259-residue protein sequence, read N- to C-terminus: Exotoxin A regulatory protein (259 aa).

It localises to the cell inner membrane. Functionally, positive regulation of toxA gene transcription. The sequence is that of Exotoxin A regulatory protein (toxR) from Pseudomonas aeruginosa (strain ATCC 15692 / DSM 22644 / CIP 104116 / JCM 14847 / LMG 12228 / 1C / PRS 101 / PAO1).